Consider the following 162-residue polypeptide: Peptidyl-prolyl cis-trans isomerase-like 1 (162 aa).

One can recognise a PPIase cyclophilin-type domain in the interval 1–155; that stretch reads MATDVAFDTS…DGVKILRARI (155 aa).

Belongs to the cyclophilin-type PPIase family. PPIL1 subfamily.

It carries out the reaction [protein]-peptidylproline (omega=180) = [protein]-peptidylproline (omega=0). Its function is as follows. PPIases accelerate the folding of proteins. It catalyzes the cis-trans isomerization of proline imidic peptide bonds in oligopeptides. The sequence is that of Peptidyl-prolyl cis-trans isomerase-like 1 (cypC) from Aspergillus niger.